Consider the following 512-residue polypeptide: Sodium-dependent phosphate transport protein 1, chloroplastic (512 aa).

Residues 1-59 (MNARALLCSSNIHSLYTSNRPPEKTSSSRSLRNLKPSPKSLRVWIYPRNRSSVFRVLVR) constitute a chloroplast transit peptide. The next 11 membrane-spanning stretches (helical) occupy residues 103–123 (WVIV…RVNM), 141–161 (VGLI…AGGI), 171–191 (VLGF…VAAK), 192–212 (LGLP…GVAM), 234–254 (LVYS…PFLI), 257–277 (FGWP…LTLW), 323–343 (VWAL…LLTW), 361–381 (LLSV…GWIA), 401–421 (IGFL…SPTM), 453–473 (GVLL…GTAA), and 486–506 (VFTI…LFST).

The protein belongs to the major facilitator superfamily. Sodium/anion cotransporter (TC 2.A.1.14) family. Expressed in flower buds, sepals of mature flowers and mature leaves, less in senescent leaves and at low levels in roots.

It localises to the plastid. The protein localises to the chloroplast thylakoid membrane. Functionally, specific for inorganic phosphate transport across the thylakoid membrane in a sodium dependent manner. Binds glutamate but cannot transport it. May act as an ascorbate transporter at the thylakoid membrane. This chain is Sodium-dependent phosphate transport protein 1, chloroplastic (ANTR1), found in Arabidopsis thaliana (Mouse-ear cress).